We begin with the raw amino-acid sequence, 704 residues long: DNA ligase (704 aa).

NAD(+)-binding positions include 43–47, 92–93, and glutamate 124; these read DADYD and SL. Catalysis depends on lysine 126, which acts as the N6-AMP-lysine intermediate. NAD(+) contacts are provided by arginine 147, glutamate 182, lysine 298, and lysine 322. 4 residues coordinate Zn(2+): cysteine 427, cysteine 430, cysteine 445, and cysteine 451. Residues 625–704 enclose the BRCT domain; that stretch reads PVASPVAGKI…DGWLRLIGDA (80 aa).

This sequence belongs to the NAD-dependent DNA ligase family. LigA subfamily. Mg(2+) serves as cofactor. The cofactor is Mn(2+).

The catalysed reaction is NAD(+) + (deoxyribonucleotide)n-3'-hydroxyl + 5'-phospho-(deoxyribonucleotide)m = (deoxyribonucleotide)n+m + AMP + beta-nicotinamide D-nucleotide.. DNA ligase that catalyzes the formation of phosphodiester linkages between 5'-phosphoryl and 3'-hydroxyl groups in double-stranded DNA using NAD as a coenzyme and as the energy source for the reaction. It is essential for DNA replication and repair of damaged DNA. In Cereibacter sphaeroides (strain ATCC 17029 / ATH 2.4.9) (Rhodobacter sphaeroides), this protein is DNA ligase.